The chain runs to 580 residues: Zinc finger CCCH domain-containing protein 47 (580 aa).

2 ANK repeats span residues Glu72–Arg102 and Glu107–Ser139. 2 consecutive C3H1-type zinc fingers follow at residues Pro251 to Phe278 and Gln286 to Glu310. A disordered region spans residues Tyr421–His451.

As to expression, expressed in roots and anthers.

It localises to the nucleus. Its function is as follows. Involved in salt stress response. May positively modulate plant tolerance to salt stress. The polypeptide is Zinc finger CCCH domain-containing protein 47 (Arabidopsis thaliana (Mouse-ear cress)).